Consider the following 194-residue polypeptide: Fe/S biogenesis protein NfuA (194 aa).

[4Fe-4S] cluster-binding residues include C151 and C154.

The protein belongs to the NfuA family. In terms of assembly, homodimer. [4Fe-4S] cluster serves as cofactor.

Functionally, involved in iron-sulfur cluster biogenesis. Binds a 4Fe-4S cluster, can transfer this cluster to apoproteins, and thereby intervenes in the maturation of Fe/S proteins. Could also act as a scaffold/chaperone for damaged Fe/S proteins. The chain is Fe/S biogenesis protein NfuA from Aliivibrio salmonicida (strain LFI1238) (Vibrio salmonicida (strain LFI1238)).